Reading from the N-terminus, the 354-residue chain is Short-chain dehydrogenase/reductase SAT2 (354 aa).

Residues I31, D85, R201, and V233 each contribute to the NADP(+) site.

This sequence belongs to the short-chain dehydrogenases/reductases (SDR) family.

The protein operates within mycotoxin biosynthesis. Its function is as follows. Short-chain dehydrogenase/reductase; part of the satratoxin SC1 cluster involved in the biosynthesis of satratoxins, trichothecene mycotoxins that are associated with human food poisonings. Satratoxins are suggested to be made by products of multiple gene clusters (SC1, SC2 and SC3) that encode 21 proteins in all, including polyketide synthases, acetyltransferases, and other enzymes expected to modify the trichothecene skeleton. SC1 encodes 10 proteins, SAT1 to SAT10. The largest are SAT8, which encodes a putative polyketide synthase (PKS) with a conventional non-reducing architecture, and SAT10, a putative protein containing four ankyrin repeats and thus may be involved in protein scaffolding. The putative short-chain reductase SAT3 may assist the PKS in some capacity. SAT6 contains a secretory lipase domain and acts probably as a trichothecene esterase. SAT5 encodes a putative acetyltransferase, and so, with SAT6, may affect endogenous protection from toxicity. The probable transcription factor SAT9 may regulate the expression of the SC1 cluster. SC2 encodes proteins SAT11 to SAT16, the largest of which encodes the putative reducing PKS SAT13. SAT11 is a cytochrome P450 monooxygenase, while SAT14 and SAT16 are probable acetyltransferases. The SC2 cluster may be regulated by the transcription factor SAT15. SC3 is a small cluster that encodes 5 proteins, SAT17 to SAT21. SAT21 is a putative MFS-type transporter which may have a role in exporting secondary metabolites. The four other proteins putatively encoded in SC3 include the taurine hydroxylase-like protein SAT17, the O-methyltransferase SAT18, the acetyltransferase SAT19, and the Cys6-type zinc finger SAT20, the latter being probably involved in regulation of SC3 expression. This is Short-chain dehydrogenase/reductase SAT2 from Stachybotrys chartarum (strain CBS 109288 / IBT 7711) (Toxic black mold).